The primary structure comprises 256 residues: Doublecortin domain-containing protein (256 aa).

A partial p25alpha domain region spans residues 71-103 (NVFERLTDTAYYTGSHRERFDEFGNGRGIAGRE). Residues 152–226 (RLMWLYRNGD…AKYLCTSGEP (75 aa)) form the Doublecortin domain.

It is found in the cytoplasm. The protein localises to the cytoskeleton. Functionally, specifically required in the formation and maintenance of the conoid fibers; the conoid is a component of the cytoskeletal apical complex, which is composed of a left-handed spiral of 14 fibers made from a nontubular tubulin polymer. Promotes the organization, curvature, and stability of the conoid fibers, and probably bridges other conoid components to the tubulin core. The sequence is that of Doublecortin domain-containing protein from Toxoplasma gondii (strain ATCC 50861 / VEG).